A 265-amino-acid polypeptide reads, in one-letter code: Eukaryotic translation initiation factor 3 subunit J (265 aa).

Residues methionine 1–leucine 71 are disordered. The segment covering tryptophan 23–proline 32 has biased composition (acidic residues). A compositionally biased stretch (basic and acidic residues) spans glutamate 42 to leucine 71. Residue serine 65 is modified to Phosphoserine. At threonine 75 the chain carries Phosphothreonine. Serine 92 is subject to Phosphoserine. Residues valine 219 to methionine 265 form a disordered region. Position 220 is an omega-N-methylarginine (arginine 220). Residues phenylalanine 249–methionine 265 show a composition bias toward acidic residues.

Belongs to the eIF-3 subunit J family. In terms of assembly, probable component of the eukaryotic translation initiation factor 3 (eIF-3) complex. Is not part of the eIF-3 core complex, with which it is associated in substochiometric amounts.

It localises to the cytoplasm. Component of the eukaryotic translation initiation factor 3 (eIF-3) complex, which is involved in protein synthesis of a specialized repertoire of mRNAs and, together with other initiation factors, stimulates binding of mRNA and methionyl-tRNAi to the 40S ribosome. The eIF-3 complex specifically targets and initiates translation of a subset of mRNAs involved in cell proliferation. The chain is Eukaryotic translation initiation factor 3 subunit J from Saccharomyces cerevisiae (strain ATCC 204508 / S288c) (Baker's yeast).